Consider the following 196-residue polypeptide: Protein GrpE (196 aa).

A disordered region spans residues 1-41; it reads MSSKEQKTPEGQAPEEIITEQHDDVEAVEPEVSAEQVDPRD.

This sequence belongs to the GrpE family. Homodimer.

The protein resides in the cytoplasm. Functionally, participates actively in the response to hyperosmotic and heat shock by preventing the aggregation of stress-denatured proteins, in association with DnaK and GrpE. It is the nucleotide exchange factor for DnaK and may function as a thermosensor. Unfolded proteins bind initially to DnaJ; upon interaction with the DnaJ-bound protein, DnaK hydrolyzes its bound ATP, resulting in the formation of a stable complex. GrpE releases ADP from DnaK; ATP binding to DnaK triggers the release of the substrate protein, thus completing the reaction cycle. Several rounds of ATP-dependent interactions between DnaJ, DnaK and GrpE are required for fully efficient folding. This chain is Protein GrpE, found in Klebsiella pneumoniae subsp. pneumoniae (strain ATCC 700721 / MGH 78578).